Reading from the N-terminus, the 129-residue chain is Procyclic form-specific polypeptide A-beta (129 aa).

A signal peptide spans 1–27 (MAPRSLYLLAVLLFSANLFAGVGFAAA). The segment at 27–111 (AAEGPEDKGL…PEPEPGAATL (85 aa)) is disordered. Acidic residues predominate over residues 53 to 104 (DDTNGTDPDPEPEPEPEPEPEPEPEPEPEPEPEPEPEPEPEPEPEPEPEPEP). An N-linked (GlcNAc...) asparagine glycan is attached at Asn56. Repeat copies occupy residues 59-60 (DP), 61-62 (DP), 63-64 (EP), 65-66 (EP), 67-68 (EP), 69-70 (EP), 71-72 (EP), 73-74 (EP), 75-76 (EP), 77-78 (EP), 79-80 (EP), 81-82 (EP), 83-84 (EP), 85-86 (EP), 87-88 (EP), 89-90 (EP), 91-92 (EP), 93-94 (EP), 95-96 (EP), 97-98 (EP), 99-100 (EP), 101-102 (EP), 103-104 (EP), and 105-106 (EP). Residues 59–106 (DPDPEPEPEPEPEPEPEPEPEPEPEPEPEPEPEPEPEPEPEPEPEPEP) are 24 X 2 AA tandem repeats of [DE]-P. Residue Gly107 is the site of GPI-anchor amidated glycine attachment. Residues 108 to 129 (AATLKSVALPFAIAAVGLVAAF) constitute a propeptide that is removed on maturation.

It is found in the cell membrane. Major surface antigen of procyclic forms. This Trypanosoma brucei brucei protein is Procyclic form-specific polypeptide A-beta (PARPA-BETA).